The primary structure comprises 66 residues: Large ribosomal subunit protein bL35c (66 aa).

The protein belongs to the bacterial ribosomal protein bL35 family.

Its subcellular location is the plastid. It is found in the chloroplast. In Gracilaria tenuistipitata var. liui (Red alga), this protein is Large ribosomal subunit protein bL35c.